Reading from the N-terminus, the 245-residue chain is 1-(5-phosphoribosyl)-5-[(5-phosphoribosylamino)methylideneamino] imidazole-4-carboxamide isomerase (245 aa).

D7 (proton acceptor) is an active-site residue. The active-site Proton donor is D129.

This sequence belongs to the HisA/HisF family.

The protein resides in the cytoplasm. It catalyses the reaction 1-(5-phospho-beta-D-ribosyl)-5-[(5-phospho-beta-D-ribosylamino)methylideneamino]imidazole-4-carboxamide = 5-[(5-phospho-1-deoxy-D-ribulos-1-ylimino)methylamino]-1-(5-phospho-beta-D-ribosyl)imidazole-4-carboxamide. It participates in amino-acid biosynthesis; L-histidine biosynthesis; L-histidine from 5-phospho-alpha-D-ribose 1-diphosphate: step 4/9. This Erwinia tasmaniensis (strain DSM 17950 / CFBP 7177 / CIP 109463 / NCPPB 4357 / Et1/99) protein is 1-(5-phosphoribosyl)-5-[(5-phosphoribosylamino)methylideneamino] imidazole-4-carboxamide isomerase.